The sequence spans 58 residues: Large ribosomal subunit protein bL32 (58 aa).

The span at 1 to 15 (MAVPKKKTSKAKRNQ) shows a compositional bias: basic residues. The disordered stretch occupies residues 1–23 (MAVPKKKTSKAKRNQRSATWKGK).

The protein belongs to the bacterial ribosomal protein bL32 family.

In Parasynechococcus marenigrum (strain WH8102), this protein is Large ribosomal subunit protein bL32.